We begin with the raw amino-acid sequence, 358 residues long: Variant-surface-glycoprotein phospholipase C (358 aa).

The PI-PLC X-box domain occupies Ile-25 to Arg-198.

In terms of assembly, monomer. Post-translationally, the N-terminus is blocked.

Its subcellular location is the membrane. It catalyses the reaction a 6-(alpha-D-glucosaminyl)-1-(1,2-diacyl-sn-glycero-3-phospho)-1D-myo-inositol = 6-(alpha-D-glucosaminyl)-1D-myo-inositol 1,2-cyclic phosphate + a 1,2-diacyl-sn-glycerol. In terms of biological role, by hydrolysis of the attached glycolipid, releases soluble variant surface glycoprotein containing phosphoinositol from the cell wall of T.brucei after cell lysis. It also cleaves similar membrane anchors on some mammalian proteins. VSG lipase may play a role in processes such as parasite differentiation or antigenic variation. The chain is Variant-surface-glycoprotein phospholipase C from Trypanosoma brucei brucei.